The primary structure comprises 76 residues: Small ribosomal subunit protein bS18 (76 aa).

It belongs to the bacterial ribosomal protein bS18 family. As to quaternary structure, part of the 30S ribosomal subunit. Forms a tight heterodimer with protein bS6.

Binds as a heterodimer with protein bS6 to the central domain of the 16S rRNA, where it helps stabilize the platform of the 30S subunit. In Pelotomaculum thermopropionicum (strain DSM 13744 / JCM 10971 / SI), this protein is Small ribosomal subunit protein bS18.